The following is a 508-amino-acid chain: Steroid 17-alpha-hydroxylase/17,20 lyase (508 aa).

Asn-202 lines the substrate pocket. Cys-442 contacts heme.

The protein belongs to the cytochrome P450 family. Heme serves as cofactor.

The protein localises to the endoplasmic reticulum membrane. Its subcellular location is the microsome membrane. It catalyses the reaction a C21-steroid + reduced [NADPH--hemoprotein reductase] + O2 = a 17alpha-hydroxy-C21-steroid + oxidized [NADPH--hemoprotein reductase] + H2O + H(+). The catalysed reaction is progesterone + reduced [NADPH--hemoprotein reductase] + O2 = 17alpha-hydroxyprogesterone + oxidized [NADPH--hemoprotein reductase] + H2O + H(+). The enzyme catalyses pregnenolone + reduced [NADPH--hemoprotein reductase] + O2 = 17alpha-hydroxypregnenolone + oxidized [NADPH--hemoprotein reductase] + H2O + H(+). It carries out the reaction 17alpha-hydroxyprogesterone + reduced [NADPH--hemoprotein reductase] + O2 = androst-4-ene-3,17-dione + acetate + oxidized [NADPH--hemoprotein reductase] + H2O + 2 H(+). It catalyses the reaction 17alpha-hydroxyprogesterone + reduced [NADPH--hemoprotein reductase] + O2 = 16alpha,17alpha-dihydroxyprogesterone + oxidized [NADPH--hemoprotein reductase] + H2O + H(+). The catalysed reaction is 16alpha,17alpha-dihydroxyprogesterone + reduced [NADPH--hemoprotein reductase] + O2 = 6beta,16alpha,17alpha-trihydroxyprogesterone + oxidized [NADPH--hemoprotein reductase] + H2O + H(+). The enzyme catalyses 17alpha-hydroxypregnenolone + reduced [NADPH--hemoprotein reductase] + O2 = 3beta-hydroxyandrost-5-en-17-one + acetate + oxidized [NADPH--hemoprotein reductase] + H2O + 2 H(+). It carries out the reaction 16alpha,17alpha-dihydroxypregnenolone + reduced [NADPH--hemoprotein reductase] + O2 = 3beta,16alpha-dihydroxy-androst-5-en-17-one + acetate + oxidized [NADPH--hemoprotein reductase] + H2O + 2 H(+). It catalyses the reaction 3beta-hydroxyandrost-5-en-17-one + reduced [NADPH--hemoprotein reductase] + O2 = 3beta,16alpha-dihydroxy-androst-5-en-17-one + oxidized [NADPH--hemoprotein reductase] + H2O + H(+). The catalysed reaction is androst-4-ene-3,17-dione + reduced [NADPH--hemoprotein reductase] + O2 = 16alpha-hydroxyandrost-4-ene-3,17-dione + oxidized [NADPH--hemoprotein reductase] + H2O + H(+). The protein operates within steroid hormone biosynthesis. It participates in steroid biosynthesis; glucocorticoid biosynthesis. With respect to regulation, regulated predominantly by intracellular cAMP levels. The 17,20-lyase activity is stimulated by cytochrome b5, which acts as an allosteric effector increasing the Vmax of the lyase activity. Functionally, a cytochrome P450 monooxygenase involved in corticoid and androgen biosynthesis. Catalyzes 17-alpha hydroxylation of C21 steroids, which is common for both pathways. A second oxidative step, required only for androgen synthesis, involves an acyl-carbon cleavage. The 17-alpha hydroxy intermediates, as part of adrenal glucocorticoids biosynthesis pathway, are precursors of cortisol. Hydroxylates steroid hormones, pregnenolone and progesterone to form 17-alpha hydroxy metabolites, followed by the cleavage of the C17-C20 bond to form C19 steroids, dehydroepiandrosterone (DHEA) and androstenedione. Has 16-alpha hydroxylase activity. Catalyzes 16-alpha hydroxylation of 17-alpha hydroxy pregnenolone, followed by the cleavage of the C17-C20 bond to form 16-alpha-hydroxy DHEA. Also 16-alpha hydroxylates androgens, relevant for estriol synthesis. Mechanistically, uses molecular oxygen inserting one oxygen atom into a substrate, and reducing the second into a water molecule, with two electrons provided by NADPH via cytochrome P450 reductase (CPR; NADPH-ferrihemoprotein reductase). This Pan troglodytes (Chimpanzee) protein is Steroid 17-alpha-hydroxylase/17,20 lyase (CYP17A1).